A 38-amino-acid chain; its full sequence is CHH precursor-related peptide (38 aa).

Positions 18 to 38 (GALEPSTPLGDLSGSLGHPVE) are disordered.

Produced by the medulla terminalis X-organ in the eyestalks and transported to the sinus gland where it is stored and released.

It is found in the secreted. This is CHH precursor-related peptide from Cancer pagurus (Rock crab).